The primary structure comprises 89 residues: Small ribosomal subunit protein uS15 (89 aa).

The protein belongs to the universal ribosomal protein uS15 family. In terms of assembly, part of the 30S ribosomal subunit. Forms a bridge to the 50S subunit in the 70S ribosome, contacting the 23S rRNA.

In terms of biological role, one of the primary rRNA binding proteins, it binds directly to 16S rRNA where it helps nucleate assembly of the platform of the 30S subunit by binding and bridging several RNA helices of the 16S rRNA. Its function is as follows. Forms an intersubunit bridge (bridge B4) with the 23S rRNA of the 50S subunit in the ribosome. The polypeptide is Small ribosomal subunit protein uS15 (Lacticaseibacillus casei (strain BL23) (Lactobacillus casei)).